The primary structure comprises 427 residues: Glutamate-1-semialdehyde 2,1-aminomutase (427 aa).

Lys265 is modified (N6-(pyridoxal phosphate)lysine).

This sequence belongs to the class-III pyridoxal-phosphate-dependent aminotransferase family. HemL subfamily. In terms of assembly, homodimer. It depends on pyridoxal 5'-phosphate as a cofactor.

It is found in the cytoplasm. It catalyses the reaction (S)-4-amino-5-oxopentanoate = 5-aminolevulinate. It participates in porphyrin-containing compound metabolism; protoporphyrin-IX biosynthesis; 5-aminolevulinate from L-glutamyl-tRNA(Glu): step 2/2. The protein is Glutamate-1-semialdehyde 2,1-aminomutase of Neisseria meningitidis serogroup B (strain ATCC BAA-335 / MC58).